The chain runs to 385 residues: Effector protein hopAB3 (385 aa).

3 disordered regions span residues 1–61 (MVGI…AGRP), 73–139 (TREW…SPLY), and 215–293 (ADSQ…PRIN). The tract at residues 1 to 333 (MVGISGRAGP…INMEDLRAAL (333 aa)) is host recognition. A compositionally biased stretch (low complexity) spans 217-234 (SQQAARAPARTPPRSSVR). Polar residues-rich tracts occupy residues 245–256 (ATESSSGSNQRS) and 265–283 (MTSNQRRPSSASNASTSQR).

The protein belongs to the HopAB family. In terms of assembly, interacts physically with plant cell Pto.

The protein localises to the secreted. Its function is as follows. Effector protein involved in gene-for-gene resistance in tomato plants. It is recognized by the host Pto resistance protein and elicits Pto and Prf-dependent hypersensitive response (HR) and programmed cell death (PCD), resulting in host immunity. In susceptible plants, promotes virulence, in part, by enhancing the development of disease symptoms and bacterial growth. The chain is Effector protein hopAB3 (hopAB3) from Pseudomonas syringae pv. maculicola.